The primary structure comprises 614 residues: MKKYDVIVIGAGHAGLEAAFATSNLNLQTALITLDEKGIGMMPCNPSIGGPAKGIVTREIDALGGIQGKAADATTMQMKILNSSKGPGVWAIRAQIDKIAYQRWFKQQIKQQKNLDLIIAEVSDLLVENNIVKGVVLSDQKIIQADYVIITTGTYLKSITHRGSVCVDEGADGTKNAKFLSDALVKLGFELIRLKTGTPARIKKDSIDFTNMILEPGTNQKIAFSHYHPVYKPYDEQLPCHIIYTNEQTHQIIRENLNKSAMYGGMISGIGPRYCPSIEDKIVKFSEKPRHQIFVEPESYELDSMYLGGFSTSMPIDVQEKMIRSLPGLENCEILKYAYAIEYDAIDPTQLYPSLESKLVNNLFFAGQINGTSGYEEAAAQGLMAAINVNQKYQNKEPVILGRDQAYIGVMIDDIVTKGVVEPYRLLTSRAEHRLALRNDNADDRLMKIGFEIGLLKPEVYDQYLNNLKQIKEILNWLKTTTVGQIDDLKFTTLKTNSYLIDYLKRPEIKLNDLLIYCPIKIEDEQIINKVQIQVKFEGYIKNQEENLKQLKRLNNIKLHAIVDYKEVPNISLETIDKLNKIKPLDLEQASRISGVNLTDIAMIKYYLERIKND.

Position 10–15 (10–15 (GAGHAG)) interacts with FAD. Residue 271 to 285 (GPRYCPSIEDKIVKF) coordinates NAD(+).

It belongs to the MnmG family. As to quaternary structure, homodimer. Heterotetramer of two MnmE and two MnmG subunits. FAD serves as cofactor.

It is found in the cytoplasm. NAD-binding protein involved in the addition of a carboxymethylaminomethyl (cmnm) group at the wobble position (U34) of certain tRNAs, forming tRNA-cmnm(5)s(2)U34. This Ureaplasma parvum serovar 3 (strain ATCC 27815 / 27 / NCTC 11736) protein is tRNA uridine 5-carboxymethylaminomethyl modification enzyme MnmG.